Consider the following 313-residue polypeptide: Probable cell division protein WhiA (313 aa).

Residues 277 to 311 constitute a DNA-binding region (H-T-H motif); it reads SLKEVAAQVPDGPISKSGVNHRFQKIREMAQQLKE.

The protein belongs to the WhiA family.

Involved in cell division and chromosome segregation. The protein is Probable cell division protein WhiA of Lactobacillus gasseri (strain ATCC 33323 / DSM 20243 / BCRC 14619 / CIP 102991 / JCM 1131 / KCTC 3163 / NCIMB 11718 / NCTC 13722 / AM63).